The chain runs to 319 residues: Acetyl-coenzyme A carboxylase carboxyl transferase subunit alpha (319 aa).

The CoA carboxyltransferase C-terminal domain maps to 35–296 (NIDEEVHRLR…KAQLLADLAD (262 aa)).

Belongs to the AccA family. As to quaternary structure, acetyl-CoA carboxylase is a heterohexamer composed of biotin carboxyl carrier protein (AccB), biotin carboxylase (AccC) and two subunits each of ACCase subunit alpha (AccA) and ACCase subunit beta (AccD).

The protein resides in the cytoplasm. It catalyses the reaction N(6)-carboxybiotinyl-L-lysyl-[protein] + acetyl-CoA = N(6)-biotinyl-L-lysyl-[protein] + malonyl-CoA. It participates in lipid metabolism; malonyl-CoA biosynthesis; malonyl-CoA from acetyl-CoA: step 1/1. Functionally, component of the acetyl coenzyme A carboxylase (ACC) complex. First, biotin carboxylase catalyzes the carboxylation of biotin on its carrier protein (BCCP) and then the CO(2) group is transferred by the carboxyltransferase to acetyl-CoA to form malonyl-CoA. The sequence is that of Acetyl-coenzyme A carboxylase carboxyl transferase subunit alpha from Escherichia coli O139:H28 (strain E24377A / ETEC).